The chain runs to 103 residues: Small ribosomal subunit protein uS10 (103 aa).

Belongs to the universal ribosomal protein uS10 family. As to quaternary structure, part of the 30S ribosomal subunit.

Involved in the binding of tRNA to the ribosomes. This Haemophilus ducreyi (strain 35000HP / ATCC 700724) protein is Small ribosomal subunit protein uS10.